A 492-amino-acid chain; its full sequence is Target of Myb1 membrane trafficking protein (492 aa).

Met-1 carries the post-translational modification N-acetylmethionine. Ser-11 carries the post-translational modification Phosphoserine. The 133-residue stretch at 20-152 (ATDGSLQSED…DLRRKGLEFP (133 aa)) folds into the VHS domain. The KRKK signature appears at 48-56 (KDAFRAVKK). Ser-160 carries the phosphoserine modification. Thr-164 carries the phosphothreonine modification. Residues 167-195 (RTVFNSETPSRQNSVSSNTSQRGDLSQHA) are compositionally biased toward polar residues. The interval 167 to 215 (RTVFNSETPSRQNSVSSNTSQRGDLSQHATPLPTPAVLPGDSPITPTPE) is disordered. Ser-176, Ser-180, and Ser-208 each carry phosphoserine. A GAT domain is found at 215 to 303 (EQIGKLRSEL…VFLRHERFER (89 aa)). The tract at residues 321–326 (DLIDMG) is clathrin box. Residues Ser-355 and Ser-376 each carry the phosphoserine modification. Lys-385 participates in a covalent cross-link: Glycyl lysine isopeptide (Lys-Gly) (interchain with G-Cter in SUMO2). The tract at residues 392–463 (TDGLAGALDA…ADRLPNLASP (72 aa)) is interaction with MYO6. Residues 450–492 (RAKAADRLPNLASPSAEGPPRPSPGTAPRRKTQEKDDDMLFAL) are disordered. The residue at position 462 (Ser-462) is a Phosphoserine.

Belongs to the TOM1 family. Found in a complex with TOLLIP; interacts (via GAT domain) with TOLLIP (via N-terminus); the interactions leads to TOM1-recruitment to endosomes and inhibition of TOLLIP binding to PtdIns(3)P. Interacts (via GAT domain and the C-terminal part of the VHS domain) with UBC/ubiquitin. Interacts (via clathrin box and C-terminus) with clathrin heavy chain. Interacts with MYO6. Interacts with TAX1BP1; CALCOCO2/NDP52 and OPTN; the interaction is indirect and is mediated by MYO6, which acts as a bridge between TOM1 and the three autophagy receptors. Interacts (via C-terminus) with ZFYVE16 (via C-terminus); interaction is required to target TOM1 and clathrin to endosomes. Interacts with LRBA. Post-translationally, monoubiquitinated. Ubiquitous. In adult brain, it is highly expressed at the mesencephalic level, in the hippocampal formation and medial lemniscus. In cerebellum, it is highly expressed in Purkinje cells and granular layers.

The protein resides in the cytoplasm. It is found in the endosome membrane. It localises to the early endosome membrane. Functionally, adapter protein that plays a role in the intracellular membrane trafficking of ubiquitinated proteins, thereby participating in autophagy, ubiquitination-dependent signaling and receptor recycling pathways. Acts as a MYO6/Myosin VI adapter protein that targets MYO6 to endocytic structures. Together with MYO6, required for autophagosomal delivery of endocytic cargo, the maturation of autophagosomes and their fusion with lysosomes. MYO6 links TOM1 with autophagy receptors, such as TAX1BP1; CALCOCO2/NDP52 and OPTN. Binds to polyubiquitinated proteins via its GAT domain. In a complex with TOLLIP, recruits ubiquitin-conjugated proteins onto early endosomes. The Tom1-Tollip complex may regulate endosomal trafficking by linking polyubiquitinated proteins to clathrin. Mediates clathrin recruitment to early endosomes by ZFYVE16. Modulates binding of TOLLIP to phosphatidylinositol 3-phosphate (PtdIns(3)P) via binding competition; the association with TOLLIP may favor the release of TOLLIP from endosomal membranes, allowing TOLLIP to commit to cargo trafficking. Acts as a phosphatidylinositol 5-phosphate (PtdIns(5)P) effector by binding to PtdIns(5)P, thereby regulating endosomal maturation. PtdIns(5)P-dependent recruitment to signaling endosomes may block endosomal maturation. Also inhibits Toll-like receptor (TLR) signaling and participates in immune receptor recycling. In Mus musculus (Mouse), this protein is Target of Myb1 membrane trafficking protein.